Reading from the N-terminus, the 270-residue chain is MDQLQIKDLEMFAYHGLFPSEKELGQKFVVSAILSYDMTKAATDLDLTASVHYGELCQQWTTWFQETSEDLIETVAYKLVERTFEFYPLVQEMKLELKKPWAPVHLSLDTCSVTIHRRKQRAFIALGSNMGDKQANLKQAIDKLRARGIHILKESSVLATEPWGGVEQDSFANQVVEVETWLPAQDLLETLLAIESELGRVREVHWGPRLIDLDLLFVEDQILYTDDLILPHPYIAERLFVLESLQEIAPHFIHPILKQPIRNLYDALKK.

Residues Met1–Lys119 are DHNA. Residues Glu21, Tyr53, and Ile72–Glu73 contribute to the substrate site. Residue Lys99 is the Proton donor/acceptor; for DHNA activity of the active site. The HPPK stretch occupies residues Gln120 to Lys270. Residues Thr160–Trp163, Phe171–Asn173, Leu192–Glu195, Arg200–Leu215, Asp227–Pro233, and Arg238–Phe240 contribute to the ATP site. Mg(2+) contacts are provided by Asp212 and Asp214.

In the N-terminal section; belongs to the DHNA family. This sequence in the C-terminal section; belongs to the HPPK family. Homotrimer or homotetramer.

The catalysed reaction is 7,8-dihydroneopterin = 6-hydroxymethyl-7,8-dihydropterin + glycolaldehyde. The enzyme catalyses 6-hydroxymethyl-7,8-dihydropterin + ATP = (7,8-dihydropterin-6-yl)methyl diphosphate + AMP + H(+). It participates in cofactor biosynthesis; tetrahydrofolate biosynthesis; 2-amino-4-hydroxy-6-hydroxymethyl-7,8-dihydropteridine diphosphate from 7,8-dihydroneopterin triphosphate: step 3/4. The protein operates within cofactor biosynthesis; tetrahydrofolate biosynthesis; 2-amino-4-hydroxy-6-hydroxymethyl-7,8-dihydropteridine diphosphate from 7,8-dihydroneopterin triphosphate: step 4/4. Functionally, catalyzes two sequential steps of tetrahydrofolate biosynthesis, the conversion of 7,8-dihydroneopterin to 6-hydroxymethyl-7,8-dihydropterin diphosphate. The protein is Bifunctional folate synthesis protein of Streptococcus pneumoniae serotype 4 (strain ATCC BAA-334 / TIGR4).